Here is a 227-residue protein sequence, read N- to C-terminus: Eukaryotic translation initiation factor NCBP (227 aa).

The span at 1 to 22 (MEPAAEKREAEQEELQQQHDEP) shows a compositional bias: basic and acidic residues. Positions 1–43 (MEPAAEKREAEQEELQQQHDEPAVPSADDDEAEAEENERRNRE) are disordered. The span at 27-36 (ADDDEAEAEE) shows a compositional bias: acidic residues.

The protein belongs to the eukaryotic initiation factor 4E family. As to quaternary structure, EIF4F is a multi-subunit complex, the composition of which varies with external and internal environmental conditions. It is composed of at least EIF4A, EIF4E and EIF4G. EIF4E is also known to interact with other partners. In higher plants two isoforms of EIF4F have been identified, named isoform EIF4F and isoform EIF(iso)4F. Isoform EIF4F has subunits p220 and p26, whereas isoform EIF(iso)4F has subunits p82 and p28.

In terms of biological role, recognizes and binds the 7-methylguanosine-containing mRNA cap during an early step in the initiation of protein synthesis and facilitates ribosome binding by inducing the unwinding of the mRNAs secondary structures. The chain is Eukaryotic translation initiation factor NCBP (NCBP) from Oryza sativa subsp. japonica (Rice).